We begin with the raw amino-acid sequence, 247 residues long: Carboxy-S-adenosyl-L-methionine synthase (247 aa).

S-adenosyl-L-methionine contacts are provided by residues Y39, 64–66 (GCS), 89–90 (DN), 117–118 (DI), N132, and R199.

This sequence belongs to the class I-like SAM-binding methyltransferase superfamily. Cx-SAM synthase family. Homodimer.

The catalysed reaction is prephenate + S-adenosyl-L-methionine = carboxy-S-adenosyl-L-methionine + 3-phenylpyruvate + H2O. Functionally, catalyzes the conversion of S-adenosyl-L-methionine (SAM) to carboxy-S-adenosyl-L-methionine (Cx-SAM). The protein is Carboxy-S-adenosyl-L-methionine synthase of Salmonella enteritidis PT4 (strain P125109).